The primary structure comprises 513 residues: V-type proton ATPase subunit B (513 aa).

Arg-375 contributes to the ATP binding site. Over residues 484-503 (ADRKGKGKDKPTTKDTRDTA) the composition is skewed to basic and acidic residues. The interval 484–513 (ADRKGKGKDKPTTKDTRDTAAPEEENLIDA) is disordered. The span at 504–513 (APEEENLIDA) shows a compositional bias: acidic residues.

It belongs to the ATPase alpha/beta chains family. V-ATPase is a heteromultimeric enzyme composed of a peripheral catalytic V1 complex (components A to H) attached to an integral membrane V0 proton pore complex (components: a, c, c', c'', d, e, f and VOA1).

The protein resides in the vacuole membrane. In terms of biological role, non-catalytic subunit of the V1 complex of vacuolar(H+)-ATPase (V-ATPase), a multisubunit enzyme composed of a peripheral complex (V1) that hydrolyzes ATP and a membrane integral complex (V0) that translocates protons. V-ATPase is responsible for acidifying and maintaining the pH of intracellular compartments. In Neurospora crassa (strain ATCC 24698 / 74-OR23-1A / CBS 708.71 / DSM 1257 / FGSC 987), this protein is V-type proton ATPase subunit B.